We begin with the raw amino-acid sequence, 343 residues long: MLQTYLQSIMNQSHLTYDEAESVTNLMLNGSDPHQIAAFLAVLKYRGETPTEIAGMVSALQKQATSVDLPFPALDIVGTGGDLANTVNISTGSAILSAACGIPIAKHGNRSVSSQSGSADVLEALGIEIEMTPEELLSCIQEVGIGFMFAPIYHPSLKKLAPIRKGMKIPSTFNILGPLLNPANTEYSLIGVSNEPILELMSEVCLQFQNTQRTFLFHGSGLDELTTLGKVVGYDIQQGKKTRIEIDPTSFGFASCKIEELKGGDSKMNAFILKKAFSGQQGAIADALIFNAGAAVWIFGNATTLEEGIQIARQTLMEGEALRVLEKWVAFSQQLKLKRGSCN.

Residues Gly-78, 81-82 (GD), Thr-86, 88-91 (NIST), 106-114 (KHGNRSVSS), and Ser-118 each bind 5-phospho-alpha-D-ribose 1-diphosphate. Gly-78 serves as a coordination point for anthranilate. Ser-90 provides a ligand contact to Mg(2+). Asn-109 serves as a coordination point for anthranilate. Arg-164 is an anthranilate binding site. 2 residues coordinate Mg(2+): Asp-223 and Glu-224.

The protein belongs to the anthranilate phosphoribosyltransferase family. Homodimer. Mg(2+) serves as cofactor.

The catalysed reaction is N-(5-phospho-beta-D-ribosyl)anthranilate + diphosphate = 5-phospho-alpha-D-ribose 1-diphosphate + anthranilate. Its pathway is amino-acid biosynthesis; L-tryptophan biosynthesis; L-tryptophan from chorismate: step 2/5. Functionally, catalyzes the transfer of the phosphoribosyl group of 5-phosphorylribose-1-pyrophosphate (PRPP) to anthranilate to yield N-(5'-phosphoribosyl)-anthranilate (PRA). The chain is Anthranilate phosphoribosyltransferase from Chlamydia felis (strain Fe/C-56) (Chlamydophila felis).